A 328-amino-acid polypeptide reads, in one-letter code: Dolichyl-diphosphooligosaccharide--protein glycosyltransferase subunit MAGT1 (328 aa).

A signal peptide spans 1–22 (MLHKLLIVVFLVVCLHDMRLNG). The Extracellular portion of the chain corresponds to 23–177 (QKKKETLLSE…DVHIRVIRPP (155 aa)). The Thioredoxin domain occupies 40–168 (WVSKRAVVRL…LARWVADRTD (129 aa)). N-linked (GlcNAc...) asparagine glycosylation occurs at N64. Cysteines 80 and 83 form a disulfide. Residues 178 to 198 (NYAGPLMLGLLLAFIGSLAYL) form a helical membrane-spanning segment. Residues 199-202 (RRNN) lie on the Cytoplasmic side of the membrane. Residues 203–223 (LEFLFNKNVWAFSALCFVLIM) form a helical membrane-spanning segment. Over 224 to 257 (TSGQMWNHIRGPPYAHKNPNTGQVSYIHGSSQAQ) the chain is Extracellular. A helical transmembrane segment spans residues 258 to 278 (FVAETHIVLLFNAAVTIGMVL). The Cytoplasmic segment spans residues 279-293 (LHEAATSGLDIVKRK). The helical transmembrane segment at 294 to 314 (IMCVAGIGLVVLFFSWLLSVF) threads the bilayer. Topologically, residues 315–328 (RAKYHGYPYSFLFG) are extracellular.

It belongs to the OST3/OST6 family. In terms of assembly, accessory component of the STT3B-containing form of the oligosaccharyltransferase (OST) complex.

The protein localises to the cell membrane. Its subcellular location is the endoplasmic reticulum. It localises to the endoplasmic reticulum membrane. Its pathway is protein modification; protein glycosylation. In terms of biological role, accessory component of the STT3B-containing form of the N-oligosaccharyl transferase (OST) complex which catalyzes the transfer of a high mannose oligosaccharide from a lipid-linked oligosaccharide donor to an asparagine residue within an Asn-X-Ser/Thr consensus motif in nascent polypeptide chains. Involved in N-glycosylation of STT3B-dependent substrates. Specifically required for the glycosylation of a subset of acceptor sites that are near cysteine residues; in this function seems to act redundantly with TUSC3. In its oxidized form proposed to form transient mixed disulfides with a glycoprotein substrate to facilitate access of STT3B to the unmodified acceptor site. Also has oxidoreductase-independent functions in the STT3B-containing OST complex possibly involving substrate recognition. Could indirectly play a role in Mg(2+) transport. In Danio rerio (Zebrafish), this protein is Dolichyl-diphosphooligosaccharide--protein glycosyltransferase subunit MAGT1.